A 208-amino-acid polypeptide reads, in one-letter code: Single-stranded DNA-binding protein DdrA (208 aa).

Belongs to the RAD52 family. Homooligomer composed of 8 to 10 subunits; probably arranged in a ring-structure.

Its function is as follows. ssDNA-binding protein that contributes to the ionizing radiation resistance of D.radiodurans. Plays a role in DNA repair and genome reconstitution, in a RecA-independent process, since DdrA is essential for recovery from severe genomic fragmentation as a result of exposure to severe levels of ionizing radiation in an environment lacking nutrients. In vitro, binds to the 3'-ends of single-stranded DNA, protecting them from nuclease degradation. Thus, DdrA is part of a DNA end-protection system that helps to preserve genome integrity following irradiation or desiccation. Does not display DNA strand annealing activity, unlike eukaryotic Rad52 protein homologs. This Deinococcus radiodurans (strain ATCC 13939 / DSM 20539 / JCM 16871 / CCUG 27074 / LMG 4051 / NBRC 15346 / NCIMB 9279 / VKM B-1422 / R1) protein is Single-stranded DNA-binding protein DdrA (ddrA).